Reading from the N-terminus, the 256-residue chain is Hydroxyethylthiazole kinase (256 aa).

Met-38 is a binding site for substrate. Arg-114 and Thr-159 together coordinate ATP. A substrate-binding site is contributed by Gly-186.

It belongs to the Thz kinase family. Mg(2+) serves as cofactor.

The catalysed reaction is 5-(2-hydroxyethyl)-4-methylthiazole + ATP = 4-methyl-5-(2-phosphooxyethyl)-thiazole + ADP + H(+). It participates in cofactor biosynthesis; thiamine diphosphate biosynthesis; 4-methyl-5-(2-phosphoethyl)-thiazole from 5-(2-hydroxyethyl)-4-methylthiazole: step 1/1. Catalyzes the phosphorylation of the hydroxyl group of 4-methyl-5-beta-hydroxyethylthiazole (THZ). This chain is Hydroxyethylthiazole kinase, found in Streptococcus agalactiae serotype III (strain NEM316).